Consider the following 96-residue polypeptide: Large ribosomal subunit protein eL43 (96 aa).

The C4-type zinc finger occupies 41 to 62 (CPVCAFPKLKRAGTSIWVCDKC).

This sequence belongs to the eukaryotic ribosomal protein eL43 family. The cofactor is Zn(2+).

In Methanococcus vannielii (strain ATCC 35089 / DSM 1224 / JCM 13029 / OCM 148 / SB), this protein is Large ribosomal subunit protein eL43.